A 200-amino-acid chain; its full sequence is Histone H1 (200 aa).

Over residues 1–14 (MPPKKAPTTAKKAA) the composition is skewed to low complexity. Disordered regions lie at residues 1–20 (MPPK…PTHT) and 78–200 (DFIQ…NKKA). Residues 18 to 93 (THTSYRDMIK…GTSGPVKLAK (76 aa)) form the H15 domain. The span at 94-116 (KQAPAKPAPKKPATTTKTAAPKK) shows a compositional bias: low complexity. Residues 120-131 (KKADKAEKAEKP) are compositionally biased toward basic and acidic residues. Residues 159–185 (TAAPAVVDKPKVVSVTKSGRKTTTTAK) are compositionally biased toward low complexity.

The protein belongs to the histone H1/H5 family.

The protein resides in the nucleus. It is found in the chromosome. Functionally, could act as an H1-type linker histone. This is Histone H1 (hhoA) from Emericella nidulans (strain FGSC A4 / ATCC 38163 / CBS 112.46 / NRRL 194 / M139) (Aspergillus nidulans).